The following is a 288-amino-acid chain: MASLRDIKNRINSTKKTRQITKAMQMVSAAKLNRAQEKAQSYEVYAKKMREVVGNIAQAGSDTSHPMLEERPVKKTGYILMTSDTGLAGGYNSSLLRDMMKTINERHASEDEYAIIVLGRIGRDLLRTRKQPIIQEMVEVPDQPTFNDVSGLAKSSVEMFADGVFDELYIWYNHFVSPMTQRVTEQKLLPLASVNEGDETSSTSLYEFEPSEQQILEAVLPRYAESLIYGALLDAKASEFGARMTAMSAATDNASALIDELTLSYNRARQAAITQEITEIVGGAAALE.

It belongs to the ATPase gamma chain family. In terms of assembly, F-type ATPases have 2 components, CF(1) - the catalytic core - and CF(0) - the membrane proton channel. CF(1) has five subunits: alpha(3), beta(3), gamma(1), delta(1), epsilon(1). CF(0) has three main subunits: a, b and c.

The protein resides in the cell membrane. Produces ATP from ADP in the presence of a proton gradient across the membrane. The gamma chain is believed to be important in regulating ATPase activity and the flow of protons through the CF(0) complex. The chain is ATP synthase gamma chain from Shouchella clausii (strain KSM-K16) (Alkalihalobacillus clausii).